The following is a 510-amino-acid chain: 2,3-bisphosphoglycerate-independent phosphoglycerate mutase (510 aa).

Residues Asp-14 and Ser-64 each contribute to the Mn(2+) site. Ser-64 functions as the Phosphoserine intermediate in the catalytic mechanism. Substrate is bound by residues His-125, 155–156 (RD), Arg-187, Arg-193, 259–262 (RADR), and Lys-332. Mn(2+) contacts are provided by Asp-399, His-403, Asp-440, His-441, and His-459.

This sequence belongs to the BPG-independent phosphoglycerate mutase family. Monomer. Mn(2+) is required as a cofactor.

It catalyses the reaction (2R)-2-phosphoglycerate = (2R)-3-phosphoglycerate. It participates in carbohydrate degradation; glycolysis; pyruvate from D-glyceraldehyde 3-phosphate: step 3/5. Its function is as follows. Catalyzes the interconversion of 2-phosphoglycerate and 3-phosphoglycerate. This is 2,3-bisphosphoglycerate-independent phosphoglycerate mutase from Ectopseudomonas mendocina (strain ymp) (Pseudomonas mendocina).